Consider the following 407-residue polypeptide: 5-aminolevulinate synthase 2 (407 aa).

Substrate is bound by residues Arg-21 and Ser-137. The pyridoxal 5'-phosphate site is built by Ser-189, His-217, and Thr-245. Residue Lys-248 is part of the active site. Lys-248 carries the post-translational modification N6-(pyridoxal phosphate)lysine. Pyridoxal 5'-phosphate-binding residues include Thr-277 and Thr-278. Thr-363 contacts substrate.

Belongs to the class-II pyridoxal-phosphate-dependent aminotransferase family. As to quaternary structure, homodimer. It depends on pyridoxal 5'-phosphate as a cofactor.

It carries out the reaction succinyl-CoA + glycine + H(+) = 5-aminolevulinate + CO2 + CoA. It functions in the pathway porphyrin-containing compound metabolism; protoporphyrin-IX biosynthesis; 5-aminolevulinate from glycine: step 1/1. The protein is 5-aminolevulinate synthase 2 (hemT) of Cereibacter sphaeroides (strain ATCC 17023 / DSM 158 / JCM 6121 / CCUG 31486 / LMG 2827 / NBRC 12203 / NCIMB 8253 / ATH 2.4.1.) (Rhodobacter sphaeroides).